A 96-amino-acid polypeptide reads, in one-letter code: uncharacterized protein (96 aa).

The HTH cro/C1-type domain occupies 38 to 91 (IEQLRKGTGLKIDDFARVLGVSVAMVKEWESRRVKPSSAELKLMRLIQANPALS). Residues 49-68 (IDDFARVLGVSVAMVKEWES) constitute a DNA-binding region (H-T-H motif).

This is an uncharacterized protein from Escherichia coli O157:H7.